The sequence spans 303 residues: tRNA pseudouridine synthase B (303 aa).

Asp-38 serves as the catalytic Nucleophile.

The protein belongs to the pseudouridine synthase TruB family. Type 1 subfamily.

The enzyme catalyses uridine(55) in tRNA = pseudouridine(55) in tRNA. Its function is as follows. Responsible for synthesis of pseudouridine from uracil-55 in the psi GC loop of transfer RNAs. The protein is tRNA pseudouridine synthase B of Oceanobacillus iheyensis (strain DSM 14371 / CIP 107618 / JCM 11309 / KCTC 3954 / HTE831).